Reading from the N-terminus, the 505-residue chain is Apolipoprotein N-acyltransferase (505 aa).

6 helical membrane passes run L23–Y43, G58–N78, P85–L105, L125–F145, L162–L182, and P192–L212. One can recognise a CN hydrolase domain in the interval I230 to P469. Catalysis depends on E269, which acts as the Proton acceptor. The active site involves K329. The active-site Nucleophile is the C381. Residues W482–A502 form a helical membrane-spanning segment.

The protein belongs to the CN hydrolase family. Apolipoprotein N-acyltransferase subfamily.

The protein localises to the cell inner membrane. The enzyme catalyses N-terminal S-1,2-diacyl-sn-glyceryl-L-cysteinyl-[lipoprotein] + a glycerophospholipid = N-acyl-S-1,2-diacyl-sn-glyceryl-L-cysteinyl-[lipoprotein] + a 2-acyl-sn-glycero-3-phospholipid + H(+). It functions in the pathway protein modification; lipoprotein biosynthesis (N-acyl transfer). Catalyzes the phospholipid dependent N-acylation of the N-terminal cysteine of apolipoprotein, the last step in lipoprotein maturation. The sequence is that of Apolipoprotein N-acyltransferase from Pseudomonas putida (strain ATCC 47054 / DSM 6125 / CFBP 8728 / NCIMB 11950 / KT2440).